The sequence spans 273 residues: 4-hydroxybenzoate octaprenyltransferase (273 aa).

8 consecutive transmembrane segments (helical) span residues 7–27 (IGIY…SEGF), 30–50 (LKLL…GCVI), 83–103 (FFVL…WLTI), 122–142 (WTYF…LMAF), 146–166 (LNEI…WTVI), 197–217 (LIIG…SNVF), 221–241 (ISYH…QYLI), and 253–273 (FLHN…SVGL).

Belongs to the UbiA prenyltransferase family. The cofactor is Mg(2+).

The protein resides in the cell inner membrane. It carries out the reaction all-trans-octaprenyl diphosphate + 4-hydroxybenzoate = 4-hydroxy-3-(all-trans-octaprenyl)benzoate + diphosphate. It participates in cofactor biosynthesis; ubiquinone biosynthesis. Functionally, catalyzes the prenylation of para-hydroxybenzoate (PHB) with an all-trans polyprenyl group. Mediates the second step in the final reaction sequence of ubiquinone-8 (UQ-8) biosynthesis, which is the condensation of the polyisoprenoid side chain with PHB, generating the first membrane-bound Q intermediate 3-octaprenyl-4-hydroxybenzoate. The protein is 4-hydroxybenzoate octaprenyltransferase of Vesicomyosocius okutanii subsp. Calyptogena okutanii (strain HA).